Here is a 624-residue protein sequence, read N- to C-terminus: Chaperone protein HtpG (624 aa).

The segment at 1 to 336 is a; substrate-binding; it reads MKGQETRGFQ…SNDLPLNVSR (336 aa). Positions 337–552 are b; that stretch reads EILQDSTVTR…ADEMGTQMAK (216 aa). The tract at residues 553 to 624 is c; that stretch reads LFAAAGQAMP…IKRVNALLLG (72 aa).

It belongs to the heat shock protein 90 family. As to quaternary structure, homodimer.

The protein localises to the cytoplasm. In terms of biological role, molecular chaperone. Has ATPase activity. The sequence is that of Chaperone protein HtpG from Enterobacter sp. (strain 638).